Here is a 185-residue protein sequence, read N- to C-terminus: Dual-action ribosomal maturation protein DarP (185 aa).

The interval 1-22 is disordered; that stretch reads MWKNGAMRGCNKETGEFLGPSR.

Belongs to the DarP family.

Its subcellular location is the cytoplasm. Member of a network of 50S ribosomal subunit biogenesis factors which assembles along the 30S-50S interface, preventing incorrect 23S rRNA structures from forming. Promotes peptidyl transferase center (PTC) maturation. This is Dual-action ribosomal maturation protein DarP from Xylella fastidiosa (strain 9a5c).